We begin with the raw amino-acid sequence, 342 residues long: Ketol-acid reductoisomerase (NADP(+)) (342 aa).

A KARI N-terminal Rossmann domain is found at 2–182 (AEIYYDNDAD…GGLRAGGIKT (181 aa)). NADP(+)-binding positions include 25–28 (YGSQ), Lys-48, Ser-51, Ser-53, and 83–86 (DQVQ). His-108 is an active-site residue. Residue Gly-134 coordinates NADP(+). Residues 183–328 (TFTEETETDL…RELRKLFAWN (146 aa)) form the KARI C-terminal knotted domain. Residues Asp-191, Glu-195, Glu-227, and Glu-231 each coordinate Mg(2+). Residue Ser-252 coordinates substrate.

Belongs to the ketol-acid reductoisomerase family. It depends on Mg(2+) as a cofactor.

It carries out the reaction (2R)-2,3-dihydroxy-3-methylbutanoate + NADP(+) = (2S)-2-acetolactate + NADPH + H(+). It catalyses the reaction (2R,3R)-2,3-dihydroxy-3-methylpentanoate + NADP(+) = (S)-2-ethyl-2-hydroxy-3-oxobutanoate + NADPH + H(+). It participates in amino-acid biosynthesis; L-isoleucine biosynthesis; L-isoleucine from 2-oxobutanoate: step 2/4. It functions in the pathway amino-acid biosynthesis; L-valine biosynthesis; L-valine from pyruvate: step 2/4. In terms of biological role, involved in the biosynthesis of branched-chain amino acids (BCAA). Catalyzes an alkyl-migration followed by a ketol-acid reduction of (S)-2-acetolactate (S2AL) to yield (R)-2,3-dihydroxy-isovalerate. In the isomerase reaction, S2AL is rearranged via a Mg-dependent methyl migration to produce 3-hydroxy-3-methyl-2-ketobutyrate (HMKB). In the reductase reaction, this 2-ketoacid undergoes a metal-dependent reduction by NADPH to yield (R)-2,3-dihydroxy-isovalerate. This Leifsonia xyli subsp. xyli (strain CTCB07) protein is Ketol-acid reductoisomerase (NADP(+)).